Consider the following 370-residue polypeptide: Phospho-N-acetylmuramoyl-pentapeptide-transferase (370 aa).

10 consecutive transmembrane segments (helical) span residues alanine 29 to leucine 49, glycine 70 to tryptophan 90, leucine 93 to phenylalanine 113, lysine 133 to glycine 153, glycine 177 to serine 197, glycine 209 to serine 229, valine 251 to alanine 271, valine 273 to methionine 293, isoleucine 298 to valine 318, and valine 349 to isoleucine 369.

Belongs to the glycosyltransferase 4 family. MraY subfamily. Mg(2+) serves as cofactor.

The protein resides in the cell inner membrane. The catalysed reaction is UDP-N-acetyl-alpha-D-muramoyl-L-alanyl-gamma-D-glutamyl-meso-2,6-diaminopimeloyl-D-alanyl-D-alanine + di-trans,octa-cis-undecaprenyl phosphate = di-trans,octa-cis-undecaprenyl diphospho-N-acetyl-alpha-D-muramoyl-L-alanyl-D-glutamyl-meso-2,6-diaminopimeloyl-D-alanyl-D-alanine + UMP. It functions in the pathway cell wall biogenesis; peptidoglycan biosynthesis. Functionally, catalyzes the initial step of the lipid cycle reactions in the biosynthesis of the cell wall peptidoglycan: transfers peptidoglycan precursor phospho-MurNAc-pentapeptide from UDP-MurNAc-pentapeptide onto the lipid carrier undecaprenyl phosphate, yielding undecaprenyl-pyrophosphoryl-MurNAc-pentapeptide, known as lipid I. This Leptospira biflexa serovar Patoc (strain Patoc 1 / Ames) protein is Phospho-N-acetylmuramoyl-pentapeptide-transferase.